Consider the following 934-residue polypeptide: Serine/threonine-protein kinase KIPK1 (934 aa).

Disordered regions lie at residues 20-40 (LPKH…KDLV), 70-113 (RLMS…RFVG), 189-227 (PLMP…FGLQ), 305-343 (SSSA…RPKQ), 395-438 (SIDD…SCNV), and 466-493 (EKET…DYSR). Polar residues-rich tracts occupy residues 82 to 94 (SASA…TSPS) and 212 to 227 (NPIS…FGLQ). Polar residues predominate over residues 395–421 (SIDDNPPSYTSSHNPKICTDSLSSVSN). The region spanning 538–879 (FNLLKKLGCG…SVEIKRHPFF (342 aa)) is the Protein kinase domain. Residues 544 to 552 (LGCGDIGTV) and Lys-567 each bind ATP. Asp-663 functions as the Proton acceptor in the catalytic mechanism. The interval 738-773 (SSNQQQGRKPKRGDHLSKTQQHLSRSLPQLVAEPTE) is disordered. The span at 755–764 (KTQQHLSRSL) shows a compositional bias: polar residues.

Belongs to the protein kinase superfamily. Ser/Thr protein kinase family. As to quaternary structure, interacts with KCBP. Interacts with PERK8, PERK9, PERK10 and PERK13. Autophosphorylated. As to expression, expressed in roots, cauline leaves, flowers and siliques.

It localises to the cytoplasm. The protein resides in the nucleus. The catalysed reaction is L-seryl-[protein] + ATP = O-phospho-L-seryl-[protein] + ADP + H(+). The enzyme catalyses L-threonyl-[protein] + ATP = O-phospho-L-threonyl-[protein] + ADP + H(+). Its function is as follows. Could be involved in the negative regulation of root growth. The polypeptide is Serine/threonine-protein kinase KIPK1 (Arabidopsis thaliana (Mouse-ear cress)).